Reading from the N-terminus, the 232-residue chain is Ion-translocating oxidoreductase complex subunit E (232 aa).

5 consecutive transmembrane segments (helical) span residues 39–59 (LGLG…ISSL), 69–89 (IPIY…LINA), 92–112 (FGLY…CIVV), 125–145 (ALSA…MFVL), and 182–202 (PFLL…MLAV).

Belongs to the NqrDE/RnfAE family. In terms of assembly, the complex is composed of six subunits: RnfA, RnfB, RnfC, RnfD, RnfE and RnfG.

It is found in the cell inner membrane. Functionally, part of a membrane-bound complex that couples electron transfer with translocation of ions across the membrane. The protein is Ion-translocating oxidoreductase complex subunit E of Klebsiella pneumoniae (strain 342).